The following is a 398-amino-acid chain: Tryptophan synthase beta chain (398 aa).

Lys-88 carries the post-translational modification N6-(pyridoxal phosphate)lysine.

It belongs to the TrpB family. As to quaternary structure, tetramer of two alpha and two beta chains. Pyridoxal 5'-phosphate is required as a cofactor.

It catalyses the reaction (1S,2R)-1-C-(indol-3-yl)glycerol 3-phosphate + L-serine = D-glyceraldehyde 3-phosphate + L-tryptophan + H2O. Its pathway is amino-acid biosynthesis; L-tryptophan biosynthesis; L-tryptophan from chorismate: step 5/5. Functionally, the beta subunit is responsible for the synthesis of L-tryptophan from indole and L-serine. The protein is Tryptophan synthase beta chain of Haemophilus influenzae (strain PittGG).